An 820-amino-acid chain; its full sequence is Leucine--tRNA ligase (820 aa).

Positions proline 40–histidine 51 match the 'HIGH' region motif. The 'KMSKS' region motif lies at lysine 601–serine 605. Lysine 604 is a binding site for ATP.

The protein belongs to the class-I aminoacyl-tRNA synthetase family.

Its subcellular location is the cytoplasm. The enzyme catalyses tRNA(Leu) + L-leucine + ATP = L-leucyl-tRNA(Leu) + AMP + diphosphate. The protein is Leucine--tRNA ligase of Chlamydia pneumoniae (Chlamydophila pneumoniae).